Reading from the N-terminus, the 349-residue chain is RxLR effector protein CRE15 (349 aa).

An N-terminal signal peptide occupies residues 1 to 33 (MITFKRLSSARWGALLTSIAVLFFLAITKGADA). The RxLR-dEER signature appears at 46-62 (RRLRTTTADAYYASEDR).

The protein belongs to the RxLR effector family. Interacts directly with the potato ortholog of vascular highway 1 (VH1)-interacting kinase (VIK), encoding a predicted MEK kinase (MAP3K).

It localises to the secreted. Its subcellular location is the host cell membrane. Effector that promotes P.infestans virulence in Nicotiana benthamiana and potato. Attenuates cell death triggered by the pathogen-associated molecular pattern infestin 1 (INF1), indicating that the effector suppresses pattern-triggered immunity. However, it does not attenuate cell death triggered by a range of resistance proteins, suggesting that it specifically suppresses INF1-triggered cell death (ICD). Targets host MAP3K VIK in order to utilize or promote its ability to negatively regulate immunity. The sequence is that of RxLR effector protein CRE15 from Phytophthora infestans (strain T30-4) (Potato late blight agent).